The sequence spans 120 residues: Large ribosomal subunit protein uL18 (120 aa).

It belongs to the universal ribosomal protein uL18 family. In terms of assembly, part of the 50S ribosomal subunit; part of the 5S rRNA/L5/L18/L25 subcomplex. Contacts the 5S and 23S rRNAs.

In terms of biological role, this is one of the proteins that bind and probably mediate the attachment of the 5S RNA into the large ribosomal subunit, where it forms part of the central protuberance. The protein is Large ribosomal subunit protein uL18 of Ehrlichia ruminantium (strain Gardel).